The following is a 442-amino-acid chain: MRYLSFFFEFFFLFSFAFAFDFDVTSDDSINSALTTVTDGMLNYYQSTSHTFTAYWWMTGAGLNSMTDTYAATGNTTHLDMLISALVANKGDNNDYAPNSEKFDLGNDDQGIWGLSAMSAAEVNMTTGDSSASFTELAQAVFNEIMSRWDTSSCGGGVRWQIYSFNNGYSYKNSISNGILFQLAARLARYTNNDTYVDLAQKVWDWSTTVGFVDLDDYTVYDGASVTSNCSSITNEQWSYNVGVYLAGTAFLYNYTNGSSVWQTHMEGLMNKALDYYFTSDKIIYEPSCEPTESCNSDQTAFKGMLARFLGYTMQLAPYTVETILPYIQSSAEAAALACSGGSDGVTCGYMWYWNNGTWDDHYGLGEQISAVETFQALLAQQSATILTLDTGASSESNPDAGTDDGDTVTITPATKSDKGWAGFLTFAFSFVFLLFSIWLYF.

The first 19 residues, 1 to 19, serve as a signal peptide directing secretion; it reads MRYLSFFFEFFFLFSFAFA. Residues 20-421 lie on the Lumenal side of the membrane; that stretch reads FDFDVTSDDS…TPATKSDKGW (402 aa). N-linked (GlcNAc...) asparagine glycans are attached at residues N75, N124, N193, N229, N254, N257, and N356. Residues 422-442 form a helical membrane-spanning segment; the sequence is AGFLTFAFSFVFLLFSIWLYF.

The protein belongs to the glycosyl hydrolase 76 family.

The protein localises to the endoplasmic reticulum membrane. It catalyses the reaction Random hydrolysis of (1-&gt;6)-alpha-D-mannosidic linkages in unbranched (1-&gt;6)-mannans.. This is Putative mannan endo-1,6-alpha-mannosidase C1198.07c from Schizosaccharomyces pombe (strain 972 / ATCC 24843) (Fission yeast).